We begin with the raw amino-acid sequence, 450 residues long: Exodeoxyribonuclease 7 large subunit (450 aa).

The protein belongs to the XseA family. Heterooligomer composed of large and small subunits.

Its subcellular location is the cytoplasm. The catalysed reaction is Exonucleolytic cleavage in either 5'- to 3'- or 3'- to 5'-direction to yield nucleoside 5'-phosphates.. Bidirectionally degrades single-stranded DNA into large acid-insoluble oligonucleotides, which are then degraded further into small acid-soluble oligonucleotides. The sequence is that of Exodeoxyribonuclease 7 large subunit from Rickettsia felis (strain ATCC VR-1525 / URRWXCal2) (Rickettsia azadi).